A 99-amino-acid polypeptide reads, in one-letter code: Large ribosomal subunit protein uL23 (99 aa).

Belongs to the universal ribosomal protein uL23 family. Part of the 50S ribosomal subunit. Contacts protein L29, and trigger factor when it is bound to the ribosome.

One of the early assembly proteins it binds 23S rRNA. One of the proteins that surrounds the polypeptide exit tunnel on the outside of the ribosome. Forms the main docking site for trigger factor binding to the ribosome. The sequence is that of Large ribosomal subunit protein uL23 from Magnetococcus marinus (strain ATCC BAA-1437 / JCM 17883 / MC-1).